Reading from the N-terminus, the 220-residue chain is Guanylate kinase (220 aa).

The 180-residue stretch at 11–190 (GVLFVLSSPS…CYGEVMAILR (180 aa)) folds into the Guanylate kinase-like domain. Residue 18-25 (SPSGAGKT) participates in ATP binding.

Belongs to the guanylate kinase family.

The protein resides in the cytoplasm. It catalyses the reaction GMP + ATP = GDP + ADP. In terms of biological role, essential for recycling GMP and indirectly, cGMP. This Sphingopyxis alaskensis (strain DSM 13593 / LMG 18877 / RB2256) (Sphingomonas alaskensis) protein is Guanylate kinase.